The following is a 136-amino-acid chain: Large ribosomal subunit protein uL16 (136 aa).

Belongs to the universal ribosomal protein uL16 family. Part of the 50S ribosomal subunit.

Binds 23S rRNA and is also seen to make contacts with the A and possibly P site tRNAs. In Ehrlichia canis (strain Jake), this protein is Large ribosomal subunit protein uL16.